Here is a 240-residue protein sequence, read N- to C-terminus: Large ribosomal subunit protein uL1 (240 aa).

This sequence belongs to the universal ribosomal protein uL1 family. Part of the 50S ribosomal subunit.

Functionally, binds directly to 23S rRNA. The L1 stalk is quite mobile in the ribosome, and is involved in E site tRNA release. Its function is as follows. Protein L1 is also a translational repressor protein, it controls the translation of the L11 operon by binding to its mRNA. The chain is Large ribosomal subunit protein uL1 from Streptomyces griseus subsp. griseus (strain JCM 4626 / CBS 651.72 / NBRC 13350 / KCC S-0626 / ISP 5235).